We begin with the raw amino-acid sequence, 285 residues long: Meiotically up-regulated gene 125 protein (285 aa).

It localises to the cytoplasm. The protein resides in the nucleus. Functionally, has a role in meiosis. This Schizosaccharomyces pombe (strain 972 / ATCC 24843) (Fission yeast) protein is Meiotically up-regulated gene 125 protein (mug125).